The chain runs to 158 residues: Cyclic pyranopterin monophosphate synthase (158 aa).

Substrate-binding positions include 75–77 (LCH) and 113–114 (ME). Asp128 is an active-site residue.

The protein belongs to the MoaC family. Homohexamer; trimer of dimers.

It catalyses the reaction (8S)-3',8-cyclo-7,8-dihydroguanosine 5'-triphosphate = cyclic pyranopterin phosphate + diphosphate. The protein operates within cofactor biosynthesis; molybdopterin biosynthesis. Catalyzes the conversion of (8S)-3',8-cyclo-7,8-dihydroguanosine 5'-triphosphate to cyclic pyranopterin monophosphate (cPMP). In Dinoroseobacter shibae (strain DSM 16493 / NCIMB 14021 / DFL 12), this protein is Cyclic pyranopterin monophosphate synthase.